We begin with the raw amino-acid sequence, 536 residues long: ATPase expression protein 3 (536 aa).

PPR repeat units lie at residues 212–246 (TTTM…KKTP) and 386–421 (TTGS…GVTP).

It localises to the mitochondrion inner membrane. Required for respiration. The polypeptide is ATPase expression protein 3 (AEP3) (Eremothecium gossypii (strain ATCC 10895 / CBS 109.51 / FGSC 9923 / NRRL Y-1056) (Yeast)).